A 473-amino-acid polypeptide reads, in one-letter code: Mitochondrial adenyl nucleotide antiporter SLC25A24-A (473 aa).

Positions 1–173 are regulatory N-terminal domain; that stretch reads MLEQVQKFLL…RFWKHSTVLD (173 aa). The Mitochondrial intermembrane portion of the chain corresponds to 1–197; sequence MLEQVQKFLL…EKKTGQWWKH (197 aa). EF-hand domains are found at residues 19 to 54, 55 to 88, 86 to 121, and 122 to 157; these read DSHTRYAELFHKLDVNKDGKVDILELQEGLKAMGMA, VGKGAEEKIVEAGDTNKDGHLDFGEFMRYLEEHE, EHEKKMKIAFTSLDKNKDGKIESSEVMNSLKTLGIN, and ISLDHAEKILKSMDSDGTLTVDWNEWRDHFLFNPAD. Ca(2+)-binding residues include D32, N34, D36, K38, E43, D68, N70, D72, H74, E79, D99, N101, D103, K105, E110, D135, D137, T139, T141, and E146. Residues 159–168 form a linker region region; that stretch reads IQQIIRFWKH. Positions 174–473 are C-terminal transmembrane transporter domain; the sequence is IGDSLTIPDE…YEKMKIQLGI (300 aa). 3 Solcar repeats span residues 192-277, 285-370, and 382-470; these read GQWW…YKKL, LGTA…LKNY, and PGVL…MKIQ. The helical transmembrane segment at 198–215 threads the bilayer; sequence LLAGGMAGAVSRTGTAPL. Residues 216 to 251 are Mitochondrial matrix-facing; sequence DRLKVMMQVHGTKGNSNIITGLKQMVKEGGVRSLWR. Residues 252 to 271 traverse the membrane as a helical segment; sequence GNGVNVIKIAPETAMKFWAY. Residues 272–294 are Mitochondrial intermembrane-facing; the sequence is EQYKKLFTSESGKLGTAERFIAG. Residues 295–308 traverse the membrane as a helical segment; sequence SLAGATAQTSIYPM. Residues 309–344 are Mitochondrial matrix-facing; sequence EVLKTRLAVGKTGQYSGMFDCAKKIMQKEGILAFYK. Residues 345–364 form a helical membrane-spanning segment; the sequence is GYIPNILGIIPYAGIDLAIY. At 365-387 the chain is on the mitochondrial intermembrane side; the sequence is ETLKNYWLQNYAKDSANPGVLVL. Residues 388–405 traverse the membrane as a helical segment; the sequence is LGCGTVSSTCGQLASYPL. Topologically, residues 406 to 444 are mitochondrial matrix; sequence ALIRTRMQAQASIEGAPQLNMGGLFRKIVAKEGFFGLYT. A helical transmembrane segment spans residues 445-464; the sequence is GIAPNFLKVLPAVSISYVVY. Residues 465 to 473 are Mitochondrial intermembrane-facing; that stretch reads EKMKIQLGI.

Belongs to the mitochondrial carrier (TC 2.A.29) family. As to quaternary structure, monomer.

Its subcellular location is the mitochondrion inner membrane. The enzyme catalyses Mg(2+)(out) + phosphate(in) + ATP(out) = Mg(2+)(in) + phosphate(out) + ATP(in). It catalyses the reaction ADP(out) + phosphate(in) + H(+)(out) = ADP(in) + phosphate(out) + H(+)(in). The catalysed reaction is AMP(out) + phosphate(in) = AMP(in) + phosphate(out). It carries out the reaction phosphate(in) + ATP(out) + 2 H(+)(out) = phosphate(out) + ATP(in) + 2 H(+)(in). The enzyme catalyses dADP(in) + ADP(out) = dADP(out) + ADP(in). It catalyses the reaction Mg(2+)(in) + ADP(out) + ATP(in) + H(+)(out) = Mg(2+)(out) + ADP(in) + ATP(out) + H(+)(in). The catalysed reaction is ADP(out) + diphosphate(in) = ADP(in) + diphosphate(out). It carries out the reaction dAMP(in) + ADP(out) + H(+)(out) = dAMP(out) + ADP(in) + H(+)(in). The enzyme catalyses 3'-AMP(in) + ADP(out) + H(+)(out) = 3'-AMP(out) + ADP(in) + H(+)(in). It catalyses the reaction dAMP(out) + phosphate(in) = dAMP(in) + phosphate(out). The catalysed reaction is 3'-AMP(out) + phosphate(in) = 3'-AMP(in) + phosphate(out). It carries out the reaction dADP(out) + phosphate(in) + H(+)(out) = dADP(in) + phosphate(out) + H(+)(in). With respect to regulation, activated by an increase in cytosolic calcium levels that induce a conformational change of the N-terminal regulatory domain, uncapping the channel and allowing transport. Inhibited by bathophenanthroline, mersalyl, p-hydroxymercuribenzoate, bromcresol purple and tannic acid. Its function is as follows. Electroneutral antiporter that mediates the transport of adenyl nucleotides through the inner mitochondrial membrane. Originally identified as an ATP-magnesium/inorganic phosphate antiporter, it also acts as a broad specificity adenyl nucleotide antiporter. By regulating the mitochondrial matrix adenyl nucleotide pool could adapt to changing cellular energetic demands and indirectly regulate adenyl nucleotide-dependent metabolic pathways. The protein is Mitochondrial adenyl nucleotide antiporter SLC25A24-A (slc25a24-a) of Xenopus laevis (African clawed frog).